The primary structure comprises 244 residues: Probable transcriptional regulatory protein CHAB381_1426 (244 aa).

Belongs to the TACO1 family.

Its subcellular location is the cytoplasm. The sequence is that of Probable transcriptional regulatory protein CHAB381_1426 from Campylobacter hominis (strain ATCC BAA-381 / DSM 21671 / CCUG 45161 / LMG 19568 / NCTC 13146 / CH001A).